A 450-amino-acid polypeptide reads, in one-letter code: Protein indeterminate-domain 13 (450 aa).

A Phosphoserine modification is found at Ser-54. C2H2-type zinc fingers lie at residues 64–86 (FFCE…KRGH) and 106–136 (YICP…SRKH). Positions 128 to 135 (IKKHFSRK) match the Nuclear localization signal motif. The C2H2-type 2; degenerate zinc-finger motif lies at 141 to 165 (WKCDKCSKKYAVISDWKAHNKICGS). 8 residues coordinate Zn(2+): Cys-143, Cys-146, His-159, Cys-163, Cys-170, Cys-172, His-185, and Cys-189. The CCHC-type 2; atypical zinc finger occupies 168–191 (FRCDCGTLFSRKDSFISHRSFCDV). An SHR-binding region spans residues 178–190 (RKDSFISHRSFCD). Over residues 248 to 263 (FGQKFTNSNPTQQQPN) the composition is skewed to polar residues. The segment at 248–280 (FGQKFTNSNPTQQQPNALALSSPPSPRSTSDSV) is disordered.

The protein resides in the nucleus. Probable transcription factor. The protein is Protein indeterminate-domain 13 of Arabidopsis thaliana (Mouse-ear cress).